The chain runs to 308 residues: B- and T-lymphocyte attenuator (308 aa).

Positions Met1 to Cys29 are cleaved as a signal peptide. At Lys30 to Tyr183 the chain is on the extracellular side. In terms of domain architecture, Ig-like V-type spans Pro32–Asn134. Intrachain disulfides connect Cys40–Cys69, Cys64–Cys124, and Cys78–Cys85. N-linked (GlcNAc...) asparagine glycosylation is found at Asn49, Asn74, Asn81, Asn148, and Asn165. Residues Ala184 to Leu204 form a helical membrane-spanning segment. Residues Arg205–Ser308 lie on the Cytoplasmic side of the membrane.

As to quaternary structure, interacts with tyrosine phosphatases PTPN6/SHP-1 and PTPN11/SHP-2. Interacts with TNFRSF14/HVEM (via cysteine-rich domain 1). In terms of processing, phosphorylated on Tyr residues by TNFRSF14 and by antigen receptors cross-linking, both inducing association with PTPN6 and PTPN11. Post-translationally, N-glycosylated.

The protein resides in the cell membrane. Functionally, inhibitory receptor on lymphocytes that negatively regulates antigen receptor signaling via PTPN6/SHP-1 and PTPN11/SHP-2. May interact in cis (on the same cell) or in trans (on other cells) with TNFRSF14. In cis interactions, appears to play an immune regulatory role inhibiting in trans interactions in naive T cells to maintain a resting state. In trans interactions, can predominate during adaptive immune response to provide survival signals to effector T cells. In Rattus norvegicus (Rat), this protein is B- and T-lymphocyte attenuator.